The primary structure comprises 505 residues: AMP phosphorylase (505 aa).

Residues glycine 170, 196-201 (SRAITS), and threonine 205 each bind AMP. Catalysis depends on aspartate 258, which acts as the Proton donor. Residues serine 266 and lysine 290 each contribute to the AMP site.

It belongs to the thymidine/pyrimidine-nucleoside phosphorylase family. Type 2 subfamily.

The enzyme catalyses AMP + phosphate = alpha-D-ribose 1,5-bisphosphate + adenine. It catalyses the reaction CMP + phosphate = cytosine + alpha-D-ribose 1,5-bisphosphate. It carries out the reaction UMP + phosphate = alpha-D-ribose 1,5-bisphosphate + uracil. In terms of biological role, catalyzes the conversion of AMP and phosphate to adenine and ribose 1,5-bisphosphate (R15P). Exhibits phosphorylase activity toward CMP and UMP in addition to AMP. Functions in an archaeal AMP degradation pathway, together with R15P isomerase and RubisCO. The protein is AMP phosphorylase of Methanococcus maripaludis (strain C5 / ATCC BAA-1333).